The chain runs to 456 residues: Myricetin 3-O-rhamnosyltransferase UGT77B2 (456 aa).

Catalysis depends on His19, which acts as the Proton acceptor. His19 is a binding site for an anthocyanidin. The active-site Charge relay is Asp116. His147 lines the an anthocyanidin pocket. Residues Thr279, Ala334, His351, Asn355, and Glu359 each contribute to the UDP-beta-L-rhamnose site. An an anthocyanidin-binding site is contributed by Ala374.

Belongs to the UDP-glycosyltransferase family. Expressed in young cromes.

The catalysed reaction is myricetin + UDP-beta-L-rhamnose = myricetin 3-O-alpha-L-rhamnoside + UDP + H(+). It functions in the pathway flavonoid metabolism. In terms of biological role, rhamnosyltransferase involved in montbretin A (MbA) biosynthesis. Catalyzes the 3-O rhamnosylation of myricetin to produce myricetin 3-O-alpha-L-rhamnoside (MR), a precursor of MbA. MbA is a potent inhibitor of human pancreatic alpha-amylase and is being developed as drug candidate to treat type-2 diabetes. In vitro, is able to transfer UDP-glucose and UDP-xylose with 50-fold less efficiency compared with UDP-rhamnose. In vitro, can use kaempferol or quercetin as substrates, although these two flavonols may not be physiological substrates in vivo. This Crocosmia x crocosmiiflora (Montbretia) protein is Myricetin 3-O-rhamnosyltransferase UGT77B2.